The following is a 137-amino-acid chain: Small ribosomal subunit protein uS12 (137 aa).

The interval 1–55 is disordered; sequence MPTINQLVRKPRQSKSKKSDSPALNRNFNSKKKKFTDLNSPQKRGVCTRVGTMTP. A 3-methylthioaspartic acid modification is found at Asp102. Positions 118-137 are disordered; the sequence is SGVDGRRQGRSLYGTKKPKK.

It belongs to the universal ribosomal protein uS12 family. In terms of assembly, part of the 30S ribosomal subunit. Contacts proteins S8 and S17. May interact with IF1 in the 30S initiation complex.

Functionally, with S4 and S5 plays an important role in translational accuracy. Interacts with and stabilizes bases of the 16S rRNA that are involved in tRNA selection in the A site and with the mRNA backbone. Located at the interface of the 30S and 50S subunits, it traverses the body of the 30S subunit contacting proteins on the other side and probably holding the rRNA structure together. The combined cluster of proteins S8, S12 and S17 appears to hold together the shoulder and platform of the 30S subunit. The polypeptide is Small ribosomal subunit protein uS12 (Staphylococcus saprophyticus subsp. saprophyticus (strain ATCC 15305 / DSM 20229 / NCIMB 8711 / NCTC 7292 / S-41)).